The sequence spans 846 residues: uncharacterized protein (846 aa).

6 disordered regions span residues 159 to 217, 254 to 276, 332 to 414, 459 to 501, 556 to 651, and 803 to 846; these read VPTF…INHI, CNLN…SNSN, NKLN…PLSI, GSSI…SNSL, QQQQ…NFND, and TTTT…NKNK. Low complexity predominate over residues 163-217; the sequence is HNQNQNNNNQNNNQNNNNNNNNNNNNNNNNNNNNNNNSQNNNNNQNNNNNHINHI. Residues 355-414 show a composition bias toward low complexity; the sequence is LQSPNSQSLANSSANISSNALNQSSSSQQQQPQSTSQQQQQQHKMNSSSGNISPPLPLSI. Residues 459-482 are compositionally biased toward polar residues; it reads GSSITPKNLSPLSSSAPNTPKQFA. Low complexity-rich tracts occupy residues 483–501, 568–642, and 811–846; these read SLSS…SNSL, QQQQ…QPNN, and NNNN…NKNK.

This is an uncharacterized protein from Dictyostelium discoideum (Social amoeba).